The primary structure comprises 340 residues: Ketol-acid reductoisomerase (NADP(+)) (340 aa).

In terms of domain architecture, KARI N-terminal Rossmann spans 1 to 183; sequence MAITVYYDKD…GGGRTGIIET (183 aa). NADP(+) is bound by residues 26–29, Arg-49, Ser-52, Ser-54, and 84–87; these read FGSQ and DEIQ. His-109 is a catalytic residue. Gly-135 serves as a coordination point for NADP(+). The KARI C-terminal knotted domain occupies 184 to 329; that stretch reads TFKAETETDL…RNLRAMMPWI (146 aa). Mg(2+)-binding residues include Asp-192, Glu-196, Glu-228, and Glu-232. Residue Ser-253 participates in substrate binding.

It belongs to the ketol-acid reductoisomerase family. Mg(2+) serves as cofactor.

It carries out the reaction (2R)-2,3-dihydroxy-3-methylbutanoate + NADP(+) = (2S)-2-acetolactate + NADPH + H(+). The catalysed reaction is (2R,3R)-2,3-dihydroxy-3-methylpentanoate + NADP(+) = (S)-2-ethyl-2-hydroxy-3-oxobutanoate + NADPH + H(+). It functions in the pathway amino-acid biosynthesis; L-isoleucine biosynthesis; L-isoleucine from 2-oxobutanoate: step 2/4. Its pathway is amino-acid biosynthesis; L-valine biosynthesis; L-valine from pyruvate: step 2/4. In terms of biological role, involved in the biosynthesis of branched-chain amino acids (BCAA). Catalyzes an alkyl-migration followed by a ketol-acid reduction of (S)-2-acetolactate (S2AL) to yield (R)-2,3-dihydroxy-isovalerate. In the isomerase reaction, S2AL is rearranged via a Mg-dependent methyl migration to produce 3-hydroxy-3-methyl-2-ketobutyrate (HMKB). In the reductase reaction, this 2-ketoacid undergoes a metal-dependent reduction by NADPH to yield (R)-2,3-dihydroxy-isovalerate. This is Ketol-acid reductoisomerase (NADP(+)) from Campylobacter jejuni (strain RM1221).